The following is a 221-amino-acid chain: NAD(P)H-hydrate epimerase (221 aa).

A YjeF N-terminal domain is found at 10–211; it reads MQQYDQYTIN…DIGIYSPAEL (202 aa). 58-62 contributes to the (6S)-NADPHX binding site; sequence NNGGD. 2 residues coordinate K(+): N59 and D121. (6S)-NADPHX is bound by residues 125–131 and D154; that span reads GIGLSKP. K(+) is bound at residue S157.

The protein belongs to the NnrE/AIBP family. Requires K(+) as cofactor.

The catalysed reaction is (6R)-NADHX = (6S)-NADHX. It catalyses the reaction (6R)-NADPHX = (6S)-NADPHX. Catalyzes the epimerization of the S- and R-forms of NAD(P)HX, a damaged form of NAD(P)H that is a result of enzymatic or heat-dependent hydration. This is a prerequisite for the S-specific NAD(P)H-hydrate dehydratase to allow the repair of both epimers of NAD(P)HX. The sequence is that of NAD(P)H-hydrate epimerase from Weissella koreensis (strain KACC 15510).